A 460-amino-acid polypeptide reads, in one-letter code: Proton extrusion protein PxcA (460 aa).

2 disordered regions span residues 82–128 (FSRL…QRRD) and 143–190 (SRYK…GSGN). Positions 90-102 (QNGSGPTSAQDKA) are enriched in polar residues. A compositionally biased stretch (low complexity) spans 107-120 (AAEANVSESSSENS). The segment covering 151–163 (KSQPISASISTSP) has biased composition (polar residues). A compositionally biased stretch (low complexity) spans 171–184 (QPTSTQPSSSNVSV). 4 helical membrane-spanning segments follow: residues 242–262 (FLLL…NFLF), 337–357 (GLKN…LIFV), 373–393 (IYGL…DVFV), and 420–440 (FIYG…KYWI).

This sequence belongs to the CemA family.

It localises to the cell inner membrane. In terms of biological role, required for H(+) efflux immediately after light irradiation to form a rapid H(+) concentration gradient across the thylakoid membranes. Together with PxcL, contributes to transient H(+) uptake following dark to light transition. The chain is Proton extrusion protein PxcA from Synechococcus sp. (strain JA-2-3B'a(2-13)) (Cyanobacteria bacterium Yellowstone B-Prime).